The primary structure comprises 234 residues: MQLITTENKLAGSKKALEIIEKGITSGEVNTLGLATGSTPETLYAELVKSDVDTKNVTTTNLDEYVGLAANDPNSYHYYMNELLFSKKAFKESFLPNGEATDAEAECARYEEILSEHPIDIQVLGIGTNGHIGFNEPGTSFDSLTHKVVLTDSTREANKRFFEREEDVPTHAYSMGIKSIMNAKKIILLAFGENKAQAIKETIKGPVDVNCPASVLQNHPDVTVILDNEAASLL.

The Proton acceptor; for enolization step role is filled by Asp63. Catalysis depends on Asn129, which acts as the For ring-opening step. The Proton acceptor; for ring-opening step role is filled by His131. Glu136 functions as the For ring-opening step in the catalytic mechanism.

Belongs to the glucosamine/galactosamine-6-phosphate isomerase family. NagB subfamily.

The enzyme catalyses alpha-D-glucosamine 6-phosphate + H2O = beta-D-fructose 6-phosphate + NH4(+). Its pathway is amino-sugar metabolism; N-acetylneuraminate degradation; D-fructose 6-phosphate from N-acetylneuraminate: step 5/5. In terms of biological role, catalyzes the reversible isomerization-deamination of glucosamine 6-phosphate (GlcN6P) to form fructose 6-phosphate (Fru6P) and ammonium ion. In Listeria monocytogenes serotype 4a (strain HCC23), this protein is Glucosamine-6-phosphate deaminase.